The primary structure comprises 194 residues: 3-isopropylmalate dehydratase small subunit (194 aa).

Belongs to the LeuD family. LeuD type 1 subfamily. Heterodimer of LeuC and LeuD.

It carries out the reaction (2R,3S)-3-isopropylmalate = (2S)-2-isopropylmalate. It participates in amino-acid biosynthesis; L-leucine biosynthesis; L-leucine from 3-methyl-2-oxobutanoate: step 2/4. In terms of biological role, catalyzes the isomerization between 2-isopropylmalate and 3-isopropylmalate, via the formation of 2-isopropylmaleate. This chain is 3-isopropylmalate dehydratase small subunit, found in Leuconostoc mesenteroides subsp. mesenteroides (strain ATCC 8293 / DSM 20343 / BCRC 11652 / CCM 1803 / JCM 6124 / NCDO 523 / NBRC 100496 / NCIMB 8023 / NCTC 12954 / NRRL B-1118 / 37Y).